The following is a 185-amino-acid chain: MAAQKDQQKDAEVEGLSATTLLPKLIPSGAGREWLERRRATIRPWGTFVDQQRFSRPRNVGELCQRLVRNVEYYQSNYVFVFLGLILYCVVTSPMLLVALAVFFGACYILYLRTLQSKLVLFGREVSPAHQYALAGGVSFPFFWLAGAGSAVFWVLGATLVLIGSHAAFHQIEPADGEELQMEPV.

Residues 1–78 are Cytoplasmic-facing; the sequence is MAAQKDQQKD…RNVEYYQSNY (78 aa). Residues 30-54 form a required for interaction with prenylated RAB3A and VAMP2 region; sequence AGREWLERRRATIRPWGTFVDQQRF. 2 helical membrane-spanning segments follow: residues 79 to 94 and 95 to 112; these read VFVF…VTSP and MLLV…ILYL. Over 113–131 the chain is Cytoplasmic; that stretch reads RTLQSKLVLFGREVSPAHQ. The next 2 helical transmembrane spans lie at 132 to 148 and 149 to 165; these read YALA…LAGA and GSAV…LIGS. A required for interaction with GDI1 region spans residues 165-185; it reads SHAAFHQIEPADGEELQMEPV. Residues 166–185 lie on the Cytoplasmic side of the membrane; that stretch reads HAAFHQIEPADGEELQMEPV. A required for interaction with prenylated RAB3A and VAMP2 region spans residues 175–185; sequence ADGEELQMEPV. The homodimerization stretch occupies residues 175-185; the sequence is ADGEELQMEPV.

Belongs to the PRA1 family. As to quaternary structure, homodimers. Interacts specifically with both prenylated Rab proteins (including RAB3A and RAB1), and VAMP2 (synaptobrevin-2), in an exclusive way. Interacts with NDRG1. Interacts with free GDI1 in the absence of Rab proteins. Also interacts with PCLO. In terms of tissue distribution, ubiquitous.

The protein localises to the cell membrane. It is found in the cytoplasm. Its subcellular location is the golgi apparatus. It localises to the cytoplasmic vesicle. The protein resides in the secretory vesicle. The protein localises to the synaptic vesicle. General Rab protein regulator required for vesicle formation from the Golgi complex. May control vesicle docking and fusion by mediating the action of Rab GTPases to the SNARE complexes. In addition it inhibits the removal of Rab GTPases from the membrane by GDI1. This is Prenylated Rab acceptor protein 1 (Rabac1) from Rattus norvegicus (Rat).